The sequence spans 394 residues: Small ribosomal subunit protein uS2m (394 aa).

The N-terminal 25 residues, 1-25 (MQRHVFARNFRRLSLLRNPSLTKRF), are a transit peptide targeting the mitochondrion.

The protein belongs to the universal ribosomal protein uS2 family. In terms of assembly, component of the mitochondrial small ribosomal subunit (mt-SSU). Mature yeast 74S mitochondrial ribosomes consist of a small (37S) and a large (54S) subunit. The 37S small subunit contains a 15S ribosomal RNA (15S mt-rRNA) and 34 different proteins. The 54S large subunit contains a 21S rRNA (21S mt-rRNA) and 46 different proteins.

It is found in the mitochondrion. Component of the mitochondrial ribosome (mitoribosome), a dedicated translation machinery responsible for the synthesis of mitochondrial genome-encoded proteins, including at least some of the essential transmembrane subunits of the mitochondrial respiratory chain. The mitoribosomes are attached to the mitochondrial inner membrane and translation products are cotranslationally integrated into the membrane. The sequence is that of Small ribosomal subunit protein uS2m (MRP4) from Saccharomyces cerevisiae (strain ATCC 204508 / S288c) (Baker's yeast).